The following is a 64-amino-acid chain: Putative H/ACA ribonucleoprotein complex subunit 3 (64 aa).

The protein belongs to the NOP10 family. As to quaternary structure, component of the small nucleolar ribonucleoprotein particles containing H/ACA-type snoRNAs (H/ACA snoRNPs).

The protein resides in the nucleus. It is found in the nucleolus. Required for ribosome biogenesis. Part of a complex which catalyzes pseudouridylation of rRNA. This involves the isomerization of uridine such that the ribose is subsequently attached to C5, instead of the normal N1. Pseudouridine ('psi') residues may serve to stabilize the conformation of rRNAs. In Caenorhabditis elegans, this protein is Putative H/ACA ribonucleoprotein complex subunit 3 (nola-3).